Here is a 350-residue protein sequence, read N- to C-terminus: GDSL esterase/lipase At4g10955 (350 aa).

This sequence belongs to the 'GDSL' lipolytic enzyme family.

In Arabidopsis thaliana (Mouse-ear cress), this protein is GDSL esterase/lipase At4g10955.